Consider the following 470-residue polypeptide: Dynein axonemal assembly factor 11 (470 aa).

LRR repeat units follow at residues 20-43, 44-65, 66-89, and 90-110; these read IFSL…DKWC, RELK…VSKL, KKLE…GCES, and LQKL…NSLQ. An LRRCT domain is found at 128–146; the sequence is YEGYRQYVVATLPQLKWLD. Residues 177-288 are a coiled coil; the sequence is LRKRAAEREK…NRSEEELKKK (112 aa). The interval 182–265 is disordered; it reads AEREKATNNL…SQYTPESRLE (84 aa). The segment covering 194 to 213 has biased composition (basic and acidic residues); that stretch reads KQKEGRKAQEKKPGFDRRWY. The region spanning 303–395 is the CS domain; the sequence is VNESKLDFSL…TEMIQTKRAK (93 aa). The tract at residues 447 to 470 is disordered; that stretch reads HRNSARDTADSEDFIDNAEVPPLV.

Belongs to the tilB family.

It localises to the cytoplasm. Its subcellular location is the cell projection. It is found in the cilium. The protein localises to the dynein axonemal particle. The protein resides in the flagellum. Involved in dynein arm assembly, is important for expression and transporting outer dynein arm (ODA) proteins from the cytoplasm to the cilia. This is Dynein axonemal assembly factor 11 (dnaaf11) from Xenopus tropicalis (Western clawed frog).